Reading from the N-terminus, the 444-residue chain is Acyl-CoA 6-desaturase (444 aa).

At 1 to 130 (MGKGGNQGEG…EDMNLFKTNH (130 aa)) the chain is on the cytoplasmic side. One can recognise a Cytochrome b5 heme-binding domain in the interval 18–95 (MPTFRWEEIQ…LKPLLIGELA (78 aa)). The chain crosses the membrane as a helical span at residues 131-151 (LFFFLLLSHIIVMESIAWFIL). The Lumenal portion of the chain corresponds to 152–157 (SYFGNG). A helical membrane pass occupies residues 158 to 178 (WIPTVITAFVLATSQAQAGWL). At 179–264 (QHDYGHLSVY…KYLPYNHQHE (86 aa)) the chain is on the cytoplasmic side. Residues 180 to 184 (HDYGH) carry the Histidine box-1 motif. A Histidine box-2 motif is present at residues 217–221 (HFQHH). The chain crosses the membrane as a helical span at residues 265–285 (YFFLIGPPLLIPMYFQYQIIM). Topologically, residues 286–305 (TMIRRRDWVDLAWAISYYAR) are lumenal. A helical transmembrane segment spans residues 306–326 (FFYTYIPFYGILGALVFLNFI). Over 327–444 (RFLESHWFVW…ELWLDAYLHK (118 aa)) the chain is Cytoplasmic. The Histidine box-3 motif lies at 382 to 386 (QIEHH).

It belongs to the fatty acid desaturase type 1 family. In terms of tissue distribution, expressed in the liver and brain (at protein level). Highest activity is found in the liver and adrenals followed by the testes and other organs, absent in adipose tissue.

The protein localises to the endoplasmic reticulum membrane. The protein resides in the microsome membrane. The catalysed reaction is (9Z,12Z)-octadecadienoyl-CoA + 2 Fe(II)-[cytochrome b5] + O2 + 2 H(+) = (6Z,9Z,12Z)-octadecatrienoyl-CoA + 2 Fe(III)-[cytochrome b5] + 2 H2O. The enzyme catalyses (9Z,12Z,15Z)-octadecatrienoyl-CoA + 2 Fe(II)-[cytochrome b5] + O2 + 2 H(+) = (6Z,9Z,12Z,15Z)-octadecatetraenoyl-CoA + 2 Fe(III)-[cytochrome b5] + 2 H2O. It carries out the reaction (9Z,12Z,15Z,18Z,21Z)-tetracosapentaenoyl-CoA + 2 Fe(II)-[cytochrome b5] + O2 + 2 H(+) = (6Z,9Z,12Z,15Z,18Z,21Z)-tetracosahexaenoyl-CoA + 2 Fe(III)-[cytochrome b5] + 2 H2O. It catalyses the reaction (11E)-octadecenoyl-CoA + 2 Fe(II)-[cytochrome b5] + O2 + 2 H(+) = (6Z,11E)-octadecadienoyl-CoA + 2 Fe(III)-[cytochrome b5] + 2 H2O. The catalysed reaction is (11Z,14Z)-eicosadienoyl-CoA + 2 Fe(II)-[cytochrome b5] + O2 + 2 H(+) = (8Z,11Z,14Z)-eicosatrienoyl-CoA + 2 Fe(III)-[cytochrome b5] + 2 H2O. The enzyme catalyses (11Z,14Z,17Z)-eicosatrienoyl-CoA + 2 Fe(II)-[cytochrome b5] + O2 + 2 H(+) = (8Z,11Z,14Z,17Z)-eicosatetraenoyl-CoA + 2 Fe(III)-[cytochrome b5] + 2 H2O. The protein operates within lipid metabolism; polyunsaturated fatty acid biosynthesis. Its function is as follows. Involved in the biosynthesis of highly unsaturated fatty acids (HUFA) from the essential polyunsaturated fatty acids (PUFA) linoleic acid (LA) (18:2n-6) and alpha-linolenic acid (ALA) (18:3n-3) precursors, acting as a fatty acyl-coenzyme A (CoA) desaturase that introduces a cis double bond at carbon 6 of the fatty acyl chain. Catalyzes the first and rate limiting step in this pathway which is the desaturation of LA (18:2n-6) and ALA (18:3n-3) into gamma-linoleate (GLA) (18:3n-6) and stearidonate (18:4n-3), respectively. Subsequently, in the biosynthetic pathway of HUFA n-3 series, it desaturates tetracosapentaenoate (24:5n-3) to tetracosahexaenoate (24:6n-3), which is then converted to docosahexaenoate (DHA)(22:6n-3), an important lipid for nervous system function. It can also desaturate (11E)-octadecenoate (trans-vaccenoate) at carbon 6 generating (6Z,11E)-octadecadienoate. In addition to Delta-6 activity, this enzyme exhibits Delta-8 activity with slight biases toward n-3 fatty acyl-CoA substrates. The chain is Acyl-CoA 6-desaturase (Fads2) from Rattus norvegicus (Rat).